Consider the following 270-residue polypeptide: NAD kinase (270 aa).

Catalysis depends on D45, which acts as the Proton acceptor. NAD(+)-binding positions include 45 to 46, 121 to 122, R147, D149, 160 to 165, and A184; these read DG, NE, and TAYNKS.

It belongs to the NAD kinase family. It depends on a divalent metal cation as a cofactor.

It localises to the cytoplasm. It catalyses the reaction NAD(+) + ATP = ADP + NADP(+) + H(+). In terms of biological role, involved in the regulation of the intracellular balance of NAD and NADP, and is a key enzyme in the biosynthesis of NADP. Catalyzes specifically the phosphorylation on 2'-hydroxyl of the adenosine moiety of NAD to yield NADP. This Limosilactobacillus reuteri subsp. reuteri (strain JCM 1112) (Lactobacillus reuteri) protein is NAD kinase.